Here is a 194-residue protein sequence, read N- to C-terminus: dTTP/UTP pyrophosphatase (194 aa).

Catalysis depends on D77, which acts as the Proton acceptor.

The protein belongs to the Maf family. YhdE subfamily. A divalent metal cation is required as a cofactor.

It is found in the cytoplasm. It carries out the reaction dTTP + H2O = dTMP + diphosphate + H(+). The enzyme catalyses UTP + H2O = UMP + diphosphate + H(+). In terms of biological role, nucleoside triphosphate pyrophosphatase that hydrolyzes dTTP and UTP. May have a dual role in cell division arrest and in preventing the incorporation of modified nucleotides into cellular nucleic acids. This Flavobacterium johnsoniae (strain ATCC 17061 / DSM 2064 / JCM 8514 / BCRC 14874 / CCUG 350202 / NBRC 14942 / NCIMB 11054 / UW101) (Cytophaga johnsonae) protein is dTTP/UTP pyrophosphatase.